A 95-amino-acid polypeptide reads, in one-letter code: Aspartyl/glutamyl-tRNA(Asn/Gln) amidotransferase subunit C (95 aa).

Belongs to the GatC family. As to quaternary structure, heterotrimer of A, B and C subunits.

The enzyme catalyses L-glutamyl-tRNA(Gln) + L-glutamine + ATP + H2O = L-glutaminyl-tRNA(Gln) + L-glutamate + ADP + phosphate + H(+). The catalysed reaction is L-aspartyl-tRNA(Asn) + L-glutamine + ATP + H2O = L-asparaginyl-tRNA(Asn) + L-glutamate + ADP + phosphate + 2 H(+). Allows the formation of correctly charged Asn-tRNA(Asn) or Gln-tRNA(Gln) through the transamidation of misacylated Asp-tRNA(Asn) or Glu-tRNA(Gln) in organisms which lack either or both of asparaginyl-tRNA or glutaminyl-tRNA synthetases. The reaction takes place in the presence of glutamine and ATP through an activated phospho-Asp-tRNA(Asn) or phospho-Glu-tRNA(Gln). This Allorhizobium ampelinum (strain ATCC BAA-846 / DSM 112012 / S4) (Agrobacterium vitis (strain S4)) protein is Aspartyl/glutamyl-tRNA(Asn/Gln) amidotransferase subunit C.